A 132-amino-acid chain; its full sequence is MSGWNAYIDTMTAAAPSIKRCAIVGAADGSVWARTEADNVFKASEEELKTFVALFNDVTQVPAKGADIEGVHYVVPRTEESLIFGKKENTGFFAVKTKSAVLIAVYEGPNEVAAQVRKAVESMQTYLNNAGY.

It belongs to the profilin family. In terms of assembly, occurs in many kinds of cells as a complex with monomeric actin in a 1:1 ratio. In terms of tissue distribution, expressed in the nerve ring during late embryonic stages. In adults, expression is seen in the neurons, vulva and somatic gonad.

It localises to the cytoplasm. Its subcellular location is the cytoskeleton. In terms of biological role, binds to actin and affects the structure of the cytoskeleton. At high concentrations, profilin prevents the polymerization of actin, whereas it enhances it at low concentrations. By binding to PIP2, it inhibits the formation of IP3 and DG. Also binds to poly(L-proline) and phosphatidylinositol 4,5-bisphosphate micelles. This is Profilin-1 (pfn-1) from Caenorhabditis elegans.